The chain runs to 262 residues: Apolipoprotein A-Ia (262 aa).

The N-terminal stretch at 1–18 is a signal peptide; sequence MKFVALALTLLLALGSQA. The interval 32-63 is 3 X approximate tandem repeats; it reads YKAAALVYLNQVKDQAEKALDNLDGTDYEQYK. 2 tandem repeats follow at residues 64–85 and 87–107. A 10 X approximate tandem repeats region spans residues 64–262; sequence LQLSESLTKL…YETIAKAIQA (199 aa). Residues 108–118 form a 3; half-length repeat; the sequence is TDVEDLRSKLE. 5 repeat units span residues 119–140, 141–162, 163–184, 185–206, and 207–228. One copy of the 9; half-length repeat lies at 229-239; the sequence is PHTQDLQTRME. Copy 10 of the repeat occupies 240-262; the sequence is PYMENVRTTFAQMYETIAKAIQA.

The protein belongs to the apolipoprotein A1/A4/E family. In terms of assembly, homodimer. Interacts with naxe and yjefn3.

It is found in the secreted. In terms of biological role, participates in the reverse transport of cholesterol from tissues to the liver for excretion by promoting cholesterol efflux from tissues and by acting as a cofactor for the lecithin cholesterol acyltransferase (LCAT). The polypeptide is Apolipoprotein A-Ia (Danio rerio (Zebrafish)).